The primary structure comprises 339 residues: Endospore coat-associated protein YutH (339 aa).

It belongs to the CotS family.

It is found in the forespore outer membrane. The protein resides in the spore coat. Its function is as follows. Involved in sporulation. The protein is Endospore coat-associated protein YutH (yutH) of Bacillus subtilis (strain 168).